Here is a 177-residue protein sequence, read N- to C-terminus: Adenylate kinase (177 aa).

13–18 is a binding site for ATP; sequence GCGKGT. The interval 33 to 62 is NMP; that stretch reads SSGDIIREEMKKSSKEATVIREMVNSGRLA. AMP contacts are provided by residues S34, R39, 60 to 62, 85 to 88, and Q92; these read RLA and GYPR. Positions 119 to 127 are LID; that stretch reads GRNEGRDDD. Residue R120 coordinates ATP. AMP is bound by residues R124 and R135.

This sequence belongs to the adenylate kinase family. Monomer.

It localises to the cytoplasm. It carries out the reaction AMP + ATP = 2 ADP. In terms of biological role, catalyzes the reversible transfer of the terminal phosphate group between ATP and AMP. Plays an important role in cellular energy homeostasis and in adenine nucleotide metabolism. The chain is Adenylate kinase from Encephalitozoon cuniculi (strain GB-M1) (Microsporidian parasite).